Reading from the N-terminus, the 310-residue chain is MNVGILGIGRYVPEKVVTNHDLEKIMETSDEWIRTRTGIAERRIADDTIDTSYMAVEASKKALEDAGISGEDIDLILVATVTPDRAFPAVACVIQEAIGAKHAAAMDLSAACAGFMYGMITAQQFIQTGTYKNVLVVGSDKLSKIVDWNDRNTAVLFGDGAGAVVMGAVSEGKGVLSFELGADGSGGKHLYQDEYVMMNGREVFKFAVRQLGDSCLRVLDKAGLTKEDVDFLVPHQANIRIMESARERLNLPQEKMSMTIEKFGNTSASSIPIAMVEELQNGRIQDGDLIILVGFGGGLTWGAVALRWGK.

Residues cysteine 112 and histidine 235 contribute to the active site. Residues 236 to 240 (QANIR) are ACP-binding. Asparagine 265 is a catalytic residue.

Belongs to the thiolase-like superfamily. FabH family. Homodimer.

It localises to the cytoplasm. The catalysed reaction is malonyl-[ACP] + acetyl-CoA + H(+) = 3-oxobutanoyl-[ACP] + CO2 + CoA. The protein operates within lipid metabolism; fatty acid biosynthesis. Catalyzes the condensation reaction of fatty acid synthesis by the addition to an acyl acceptor of two carbons from malonyl-ACP. Catalyzes the first condensation reaction which initiates fatty acid synthesis and may therefore play a role in governing the total rate of fatty acid production. Possesses both acetoacetyl-ACP synthase and acetyl transacylase activities. Its substrate specificity determines the biosynthesis of branched-chain and/or straight-chain of fatty acids. The sequence is that of Beta-ketoacyl-[acyl-carrier-protein] synthase III 1 from Bacillus cereus (strain ATCC 14579 / DSM 31 / CCUG 7414 / JCM 2152 / NBRC 15305 / NCIMB 9373 / NCTC 2599 / NRRL B-3711).